Here is a 368-residue protein sequence, read N- to C-terminus: Chaperone protein DnaJ (368 aa).

The J domain occupies 5–70 (DYYEVLGVSK…EKRSMYDRMG (66 aa)). The CR-type zinc-finger motif lies at 132–210 (GVKKTITFTA…CHGSGVADRQ (79 aa)). Zn(2+)-binding residues include Cys-145, Cys-148, Cys-162, Cys-165, Cys-184, Cys-187, Cys-198, and Cys-201. CXXCXGXG motif repeat units lie at residues 145–152 (CEVCDGKG), 162–169 (CRTCHGTG), 184–191 (CGTCRGQG), and 198–205 (CQSCHGSG). Positions 349–368 (DGDEHSSSPKKKSFFDRLFD) are disordered. Over residues 350–368 (GDEHSSSPKKKSFFDRLFD) the composition is skewed to basic and acidic residues.

This sequence belongs to the DnaJ family. In terms of assembly, homodimer. Requires Zn(2+) as cofactor.

It is found in the cytoplasm. Functionally, participates actively in the response to hyperosmotic and heat shock by preventing the aggregation of stress-denatured proteins and by disaggregating proteins, also in an autonomous, DnaK-independent fashion. Unfolded proteins bind initially to DnaJ; upon interaction with the DnaJ-bound protein, DnaK hydrolyzes its bound ATP, resulting in the formation of a stable complex. GrpE releases ADP from DnaK; ATP binding to DnaK triggers the release of the substrate protein, thus completing the reaction cycle. Several rounds of ATP-dependent interactions between DnaJ, DnaK and GrpE are required for fully efficient folding. Also involved, together with DnaK and GrpE, in the DNA replication of plasmids through activation of initiation proteins. The sequence is that of Chaperone protein DnaJ from Acinetobacter baylyi (strain ATCC 33305 / BD413 / ADP1).